A 37-amino-acid polypeptide reads, in one-letter code: Large ribosomal subunit protein bL36 (37 aa).

Belongs to the bacterial ribosomal protein bL36 family.

The chain is Large ribosomal subunit protein bL36 from Helicobacter pylori (strain ATCC 700392 / 26695) (Campylobacter pylori).